Consider the following 969-residue polypeptide: Isoleucine--tRNA ligase (969 aa).

Positions 70–80 (PYANGAIHIGH) match the 'HIGH' region motif. Glu-601 contacts L-isoleucyl-5'-AMP. The 'KMSKS' region motif lies at 642–646 (KMSKS). Lys-645 contributes to the ATP binding site.

The protein belongs to the class-I aminoacyl-tRNA synthetase family. IleS type 1 subfamily. In terms of assembly, monomer.

It localises to the cytoplasm. It carries out the reaction tRNA(Ile) + L-isoleucine + ATP = L-isoleucyl-tRNA(Ile) + AMP + diphosphate. Functionally, catalyzes the attachment of isoleucine to tRNA(Ile). As IleRS can inadvertently accommodate and process structurally similar amino acids such as valine, to avoid such errors it has two additional distinct tRNA(Ile)-dependent editing activities. One activity is designated as 'pretransfer' editing and involves the hydrolysis of activated Val-AMP. The other activity is designated 'posttransfer' editing and involves deacylation of mischarged Val-tRNA(Ile). The protein is Isoleucine--tRNA ligase of Caulobacter vibrioides (strain ATCC 19089 / CIP 103742 / CB 15) (Caulobacter crescentus).